The following is a 607-amino-acid chain: ENTH domain-containing protein 1 (607 aa).

The region spanning 9–141 (NFVKNYSDAE…MDEPLLCKER (133 aa)) is the ENTH domain. Positions 543–574 (EAKNSISVLLREVKRAIARLHEDLSTVIQELN) form a coiled coil.

The polypeptide is ENTH domain-containing protein 1 (ENTHD1) (Homo sapiens (Human)).